The sequence spans 427 residues: Gamma-glutamyl phosphate reductase (427 aa).

This sequence belongs to the gamma-glutamyl phosphate reductase family.

It is found in the cytoplasm. It catalyses the reaction L-glutamate 5-semialdehyde + phosphate + NADP(+) = L-glutamyl 5-phosphate + NADPH + H(+). The protein operates within amino-acid biosynthesis; L-proline biosynthesis; L-glutamate 5-semialdehyde from L-glutamate: step 2/2. In terms of biological role, catalyzes the NADPH-dependent reduction of L-glutamate 5-phosphate into L-glutamate 5-semialdehyde and phosphate. The product spontaneously undergoes cyclization to form 1-pyrroline-5-carboxylate. In Sinorhizobium medicae (strain WSM419) (Ensifer medicae), this protein is Gamma-glutamyl phosphate reductase.